The chain runs to 793 residues: MGVWLNKDDYIRDLKRIILCFLIVYMAILVGTDQDFYSLLGVSKTASSREIRQAFKKLALKLHPDKNPNNPNAHGDFLKINRAYEVLKDEDLRKKYDKYGEKGLEDNQGGQYESWNYYRYDFGIYDDDPEIITLERREFDAAVNSGELWFVNFYSPGCSHCHDLAPTWRDFAKEVDGLLRIGAVNCGDDRMLCRMKGVNSYPSLFIFRSGMAPVKYHGDRSKESLVSFAMQHVRSTVTELWTGNFVNSIQTAFAAGIGWLITFCSKGGDCLTSQTRLRLSGMLDGLVNVGWMDCATQDNLCKSLDITTSTTAYFPPGATLNNKEKNSILFLNSLDAKEIYLEVIHNLPDFELLSANTLEDRLAHHRWLLFFHFGKNENSNDPELKKLKTLLKNDHIQVGRFDCSSAPDICSNLYVFQPSLAVFKGQGTKEYEIHHGKKILYDILAFAKESVNSHVTTLGPQNFPANDKEPWLVDFFAPWCPPCRALLPELRRASNLLYGQLKFGTLDCTVHEGLCNMYNIQAYPTTVVFNQSNIHEYEGHHSAEQILEFIEDLMNPSVVSLTPTTFNELVTQRKHNEVWMVDFYSPWCHPCQVLMPEWKRMARTLTGLINVGSIDCQQYHSFCAQENVQRYPEIRFFPPKSNKAYHYHSYNGWNRDAYSLRIWGLGFLPQVSTDLTPQTFSEKVLQGKNHWVIDFYAPWCGPCQNFAPEFELLARMIKGKVKAGKVDCQAYAQTCQKAGIRAYPTVKFYFYERAKRNFQEEQINTRDAKAIAALISEKLETLRNQGKRNKDEL.

An N-terminal signal peptide occupies residues 1–32 (MGVWLNKDDYIRDLKRIILCFLIVYMAILVGT). The J domain occupies 35–100 (DFYSLLGVSK…DLRKKYDKYG (66 aa)). Residues 130–232 (EIITLERREF…ESLVSFAMQH (103 aa)) enclose the Thioredoxin 1 domain. A disulfide bridge connects residues Cys-158 and Cys-161. Trxb stretches follow at residues 235 to 350 (STVT…LPDF) and 348 to 463 (PDFE…PQNF). 3 Thioredoxin domains span residues 454-553 (HVTT…IEDL), 557-662 (SVVS…SLRI), and 671-778 (VSTD…ISEK). Cys-480 and Cys-483 are disulfide-bonded. N-linked (GlcNAc...) asparagine glycosylation occurs at Asn-530. 2 cysteine pairs are disulfide-bonded: Cys-588/Cys-591 and Cys-700/Cys-703. The Prevents secretion from ER signature appears at 790-793 (KDEL).

In terms of assembly, interacts with EDEM1. Interacts with HSPA5 (via its J domain).

The protein localises to the endoplasmic reticulum lumen. In terms of biological role, endoplasmic reticulum disulfide reductase involved both in the correct folding of proteins and degradation of misfolded proteins. Required for efficient folding of proteins in the endoplasmic reticulum by catalyzing the removal of non-native disulfide bonds formed during the folding of proteins, such as LDLR. Also involved in endoplasmic reticulum-associated degradation (ERAD) by reducing incorrect disulfide bonds in misfolded glycoproteins recognized by EDEM1. Interaction with HSPA5 is required its activity, not for the disulfide reductase activity, but to facilitate the release of DNAJC10 from its substrate. Promotes apoptotic signaling pathway in response to endoplasmic reticulum stress. This is DnaJ homolog subfamily C member 10 (DNAJC10) from Homo sapiens (Human).